Consider the following 320-residue polypeptide: MSRQSKKKGRSISGWVILDKPKAMKSTEAVSKIKRLFNAQKAGHAGTLDPLASGLLPIALGEATKTVPYVMEGTKTYHFHVAWGEERSTDDLEGVVTKTSSKRPTQEEIFALLPKYTGVILQTPPQFSAIKIAGNRAYDLAREGEIFEIPPRQVKIDSLELIGTTDQGYSIFEMTCGKGTYVRSLARDMGHDLGCYGYIADLRRTAVAPFCENDLITWDALKAAIPHENTTDENCIPLKQNFSTLDGLLIETDVALKCLAHYTLNQIQAQRVRMGNSILLCDQNMPTSNIDICVTYKAQLLAIGTIDQNQFKPKRIFTTL.

The Nucleophile role is filled by aspartate 49.

Belongs to the pseudouridine synthase TruB family. Type 1 subfamily.

It catalyses the reaction uridine(55) in tRNA = pseudouridine(55) in tRNA. Responsible for synthesis of pseudouridine from uracil-55 in the psi GC loop of transfer RNAs. In Bartonella bacilliformis (strain ATCC 35685 / KC583 / Herrer 020/F12,63), this protein is tRNA pseudouridine synthase B.